The primary structure comprises 172 residues: uncharacterized protein (172 aa).

4 helical membrane-spanning segments follow: residues 20–40 (LVLI…EYIF), 48–68 (CVYE…ALII), 76–96 (LILI…HSFV), and 146–166 (MTEY…LILF).

Its subcellular location is the cell membrane. This is an uncharacterized protein from Rickettsia prowazekii (strain Madrid E).